Consider the following 592-residue polypeptide: Probable tubulin polyglutamylase TTLL2 (592 aa).

Disordered regions lie at residues 1 to 23 and 51 to 77; these read MRGR…TTTP and GVSI…MAED. The segment covering 7–23 has biased composition (polar residues); the sequence is CSSTQSQALGSLRTTTP. The TTL domain occupies 84 to 427; that stretch reads LKPLVFRVDE…NGLRNEGREA (344 aa). Residues lysine 212, 218-219, 240-243, and 253-255 contribute to the ATP site; these read RG, QKYI, and KCD. Arginine 218 is a binding site for a protein. An L-glutamate-binding site is contributed by arginine 279. ATP is bound at residue 298–299; that stretch reads TN. L-glutamate contacts are provided by serine 301 and lysine 321. Positions 373, 386, and 388 each coordinate Mg(2+). Lysine 404 serves as a coordination point for L-glutamate.

This sequence belongs to the tubulin--tyrosine ligase family. Mg(2+) serves as cofactor. Testis.

In terms of biological role, probable tubulin polyglutamylase that generates side chains of glutamate on the gamma-carboxyl group of specific glutamate residues within the C-terminal tail of target proteins. Similar to TTLL1, may acquire enzymatic activity only in complex with other proteins as it is most likely lacking domains important for autonomous activity. Probably involved in the side-chain initiation step of the polyglutamylation reaction rather than the elongation step. In Homo sapiens (Human), this protein is Probable tubulin polyglutamylase TTLL2.